Consider the following 452-residue polypeptide: Chromosomal replication initiator protein DnaA (452 aa).

The domain I, interacts with DnaA modulators stretch occupies residues Met1–Gln80. A domain II region spans residues Gln80–Ser114. The interval Tyr115 to Ala332 is domain III, AAA+ region. Residues Gly160, Gly162, Lys163, and Thr164 each contribute to the ATP site. The segment at Glu333–Val452 is domain IV, binds dsDNA.

Belongs to the DnaA family. In terms of assembly, oligomerizes as a right-handed, spiral filament on DNA at oriC.

It is found in the cytoplasm. Its function is as follows. Plays an essential role in the initiation and regulation of chromosomal replication. ATP-DnaA binds to the origin of replication (oriC) to initiate formation of the DNA replication initiation complex once per cell cycle. Binds the DnaA box (a 9 base pair repeat at the origin) and separates the double-stranded (ds)DNA. Forms a right-handed helical filament on oriC DNA; dsDNA binds to the exterior of the filament while single-stranded (ss)DNA is stabiized in the filament's interior. The ATP-DnaA-oriC complex binds and stabilizes one strand of the AT-rich DNA unwinding element (DUE), permitting loading of DNA polymerase. After initiation quickly degrades to an ADP-DnaA complex that is not apt for DNA replication. Binds acidic phospholipids. The chain is Chromosomal replication initiator protein DnaA from Histophilus somni (strain 129Pt) (Haemophilus somnus).